Consider the following 243-residue polypeptide: UPF0758 protein sll0766 (243 aa).

Residues 113–235 (VVDSPEAAAI…HQSLRQCTDL (123 aa)) form the MPN domain. 3 residues coordinate Zn(2+): His184, His186, and Asp197. The JAMM motif signature appears at 184–197 (HNHPSGGLEPSPED).

The protein belongs to the UPF0758 family.

This is UPF0758 protein sll0766 from Synechocystis sp. (strain ATCC 27184 / PCC 6803 / Kazusa).